The chain runs to 446 residues: 3-phosphoshikimate 1-carboxyvinyltransferase (446 aa).

K21, S22, and R26 together coordinate 3-phosphoshikimate. Position 21 (K21) interacts with phosphoenolpyruvate. Residues G92 and R120 each coordinate phosphoenolpyruvate. Residues S165, Q166, D308, and K335 each contribute to the 3-phosphoshikimate site. Residue Q166 coordinates phosphoenolpyruvate. Residue D308 is the Proton acceptor of the active site. Phosphoenolpyruvate is bound by residues R339, R380, and K406.

It belongs to the EPSP synthase family. As to quaternary structure, monomer.

The protein localises to the cytoplasm. The catalysed reaction is 3-phosphoshikimate + phosphoenolpyruvate = 5-O-(1-carboxyvinyl)-3-phosphoshikimate + phosphate. The protein operates within metabolic intermediate biosynthesis; chorismate biosynthesis; chorismate from D-erythrose 4-phosphate and phosphoenolpyruvate: step 6/7. Its function is as follows. Catalyzes the transfer of the enolpyruvyl moiety of phosphoenolpyruvate (PEP) to the 5-hydroxyl of shikimate-3-phosphate (S3P) to produce enolpyruvyl shikimate-3-phosphate and inorganic phosphate. This is 3-phosphoshikimate 1-carboxyvinyltransferase from Chlamydia caviae (strain ATCC VR-813 / DSM 19441 / 03DC25 / GPIC) (Chlamydophila caviae).